The following is a 470-amino-acid chain: PTS system trehalose-specific EIIBC component (470 aa).

In terms of domain architecture, PTS EIIB type-1 spans Met1–Thr88. The active-site Phosphocysteine intermediate; for EIIB activity is the Cys27. Residue Cys27 is modified to Phosphocysteine; by EIIA. The PTS EIIC type-1 domain occupies Lys108–Lys470. A run of 10 helical transmembrane segments spans residues Leu110–Ile130, Ile160–Val180, Phe183–Leu203, Gly234–Thr254, Leu263–Gly283, Phe301–Ile321, His326–Trp346, Pro347–Val367, Phe403–Leu423, and Trp443–Ala463.

The protein localises to the cell membrane. The enzyme catalyses alpha,alpha-trehalose(out) + N(pros)-phospho-L-histidyl-[protein] = alpha,alpha-trehalose 6-phosphate(in) + L-histidyl-[protein]. The phosphoenolpyruvate-dependent sugar phosphotransferase system (sugar PTS), a major carbohydrate active transport system, catalyzes the phosphorylation of incoming sugar substrates concomitantly with their translocation across the cell membrane. This system is involved in trehalose transport. The polypeptide is PTS system trehalose-specific EIIBC component (treP) (Bacillus subtilis (strain 168)).